A 415-amino-acid chain; its full sequence is Putative glutamate--cysteine ligase 2 (415 aa).

Belongs to the glutamate--cysteine ligase type 2 family. YbdK subfamily.

It carries out the reaction L-cysteine + L-glutamate + ATP = gamma-L-glutamyl-L-cysteine + ADP + phosphate + H(+). Its function is as follows. ATP-dependent carboxylate-amine ligase which exhibits weak glutamate--cysteine ligase activity. The chain is Putative glutamate--cysteine ligase 2 from Bordetella petrii (strain ATCC BAA-461 / DSM 12804 / CCUG 43448).